Reading from the N-terminus, the 400-residue chain is Keratin, type I cytoskeletal 19 (400 aa).

Residues 1 to 79 (MTSYSYRQSS…TASDGLLAGN (79 aa)) form a head region. Arg-7 carries the post-translational modification Omega-N-methylarginine. Ser-14 and Ser-22 each carry phosphoserine. Arg-24 carries the asymmetric dimethylarginine; alternate modification. Position 24 is an omega-N-methylarginine; alternate (Arg-24). At Arg-32 the chain carries Omega-N-methylarginine. A phosphoserine mark is found at Ser-35 and Ser-40. 2 positions are modified to omega-N-methylarginine: Arg-43 and Arg-51. Residues Ser-57 and Ser-72 each carry the phosphoserine modification. Residues 80 to 115 (EKLTMQNLNDRLASYLDKVRALEAANGELEVKIRDW) form a coil 1A region. The region spanning 80 to 391 (EKLTMQNLND…SLLEGQEDHY (312 aa)) is the IF rod domain. The segment at 116 to 133 (YQKQGPGPSRDYSHYYTT) is linker 1. Residues 134 to 225 (IQDLRDKILG…KNHEEEISTL (92 aa)) form a coil 1B region. Residues 226-248 (RGQVGGQVSVEVDSAPGTDLAKI) are linker 12. The necessary for interaction with PNN stretch occupies residues 244-390 (DLAKILSDMR…RSLLEGQEDH (147 aa)). The interval 249–387 (LSDMRSQYEV…ATYRSLLEGQ (139 aa)) is coil 2. Thr-323 is modified (phosphothreonine). Positions 388-400 (EDHYNNLSASKVL) are rod-like helical tail. At Tyr-391 the chain carries Phosphotyrosine. Ser-395 and Ser-397 each carry phosphoserine.

It belongs to the intermediate filament family. As to quaternary structure, heterotetramer of two type I and two type II keratins. Interacts with PNN and the actin-binding domain of DMD. Interacts with HCV core protein. (Microbial infection) Interacts with hepatitis C virus/HCV core protein. In terms of tissue distribution, expressed in a defined zone of basal keratinocytes in the deep outer root sheath of hair follicles. Also observed in sweat gland and mammary gland ductal and secretory cells, bile ducts, gastrointestinal tract, bladder urothelium, oral epithelia, esophagus, ectocervical epithelium (at protein level). Expressed in epidermal basal cells, in nipple epidermis and a defined region of the hair follicle. Also seen in a subset of vascular wall cells in both the veins and artery of human umbilical cord, and in umbilical cord vascular smooth muscle. Observed in muscle fibers accumulating in the costameres of myoplasm at the sarcolemma in structures that contain dystrophin and spectrin.

Its function is as follows. Involved in the organization of myofibers. Together with KRT8, helps to link the contractile apparatus to dystrophin at the costameres of striated muscle. This chain is Keratin, type I cytoskeletal 19 (KRT19), found in Homo sapiens (Human).